The following is a 920-amino-acid chain: MEEYKDTLNLNTTTFSMKGNLSVNEPKTYAKWQEQQVFKRMQNRKDNHGDFTLHDGPPYANGHLHLGHALNKILKDIVVKREYFKGNKIYYTPGWDCHGLPIEQQILERLEKEKTSLENPTLFREKCRDHAKKFLEIQKNEFLQLGVLGDFEDPYKTMDFKFEASIYRALVEVAKKGLLKERHKPIYWSYACESALAEAEVEYKMKKSPSIFVAFGLKKESLEKLKVKKASLVIWTTTPWTLYANVAIALKKDAIYALTQKGYLVAKALHEKLAALGVVDSEIAHEFNANDLEYLKASNPLNQRDSLITLGEHVGLEDGTGAVHTAPGHGEEDYYLGLRYNLEVLMSVDEKGCYDEGIIHNQLLDESYLGEHVFKAQKRIIEQLGDSLLLEQEIEHSYPYCWRTHKPVIYRATTQWFILMDEPFIQNDGSQKTLREVALDAIEKVEFVPSSGKNRLKTMIENRPDWCLSRQRKWGVPLAFFIDKRTNKPCFESEVLEHVAHLFEKKGCDVWWESSVKDLLPPSYQEDATHYEKVMHILDVWFDSGSTFKAVLEDYHGEKGQSPSDVILEGSDQHRGWFQSSLLIGCVLNNQAPFKKVITHGFIVDEKGEKMSKSKGNVVSLDNLLKKHGSDVVRLWVAFNDYQNDLRVSQTFFIQTEQHYKKFRNTLKFLLANFSDMDLKNLERSHNFSPLDHFILEALETISVGVNSAFEEHDFVKGLNVLMAFVTNELSGIYLDACKDSLYCDSKNNEKRQAIQMVLLATASKLCYFLAPILTHTIEEVLEHSQVLCAFLQAKDVFDLKDISVSEKLHLKEFKKPENFEAVLALRSAFNEELDRLKKEGVIKNSLECAIEVKEKALRENLVEELLMVSFVGIAKEKLSETPAFTLFKAPFYKCPRCWRFKSELENTPCKRCEEVLKER.

Residues 58-68 (PYANGHLHLGH) carry the 'HIGH' region motif. Glu569 contributes to the L-isoleucyl-5'-AMP binding site. The 'KMSKS' region signature appears at 610 to 614 (KMSKS). Lys613 provides a ligand contact to ATP. Residues Cys895, Cys898, Cys910, and Cys913 each coordinate Zn(2+).

The protein belongs to the class-I aminoacyl-tRNA synthetase family. IleS type 1 subfamily. In terms of assembly, monomer. Zn(2+) is required as a cofactor.

The protein localises to the cytoplasm. The enzyme catalyses tRNA(Ile) + L-isoleucine + ATP = L-isoleucyl-tRNA(Ile) + AMP + diphosphate. Functionally, catalyzes the attachment of isoleucine to tRNA(Ile). As IleRS can inadvertently accommodate and process structurally similar amino acids such as valine, to avoid such errors it has two additional distinct tRNA(Ile)-dependent editing activities. One activity is designated as 'pretransfer' editing and involves the hydrolysis of activated Val-AMP. The other activity is designated 'posttransfer' editing and involves deacylation of mischarged Val-tRNA(Ile). The sequence is that of Isoleucine--tRNA ligase from Helicobacter pylori (strain HPAG1).